The sequence spans 488 residues: Glutamyl-tRNA(Gln) amidotransferase subunit A (488 aa).

Catalysis depends on charge relay system residues Lys78 and Ser153. Ser177 (acyl-ester intermediate) is an active-site residue.

It belongs to the amidase family. GatA subfamily. Heterotrimer of A, B and C subunits.

The enzyme catalyses L-glutamyl-tRNA(Gln) + L-glutamine + ATP + H2O = L-glutaminyl-tRNA(Gln) + L-glutamate + ADP + phosphate + H(+). In terms of biological role, allows the formation of correctly charged Gln-tRNA(Gln) through the transamidation of misacylated Glu-tRNA(Gln) in organisms which lack glutaminyl-tRNA synthetase. The reaction takes place in the presence of glutamine and ATP through an activated gamma-phospho-Glu-tRNA(Gln). This chain is Glutamyl-tRNA(Gln) amidotransferase subunit A, found in Solidesulfovibrio magneticus (strain ATCC 700980 / DSM 13731 / RS-1) (Desulfovibrio magneticus).